The primary structure comprises 166 residues: Protein YciF (166 aa).

As to quaternary structure, homodimer.

This is Protein YciF (yciF) from Escherichia coli (strain K12).